A 567-amino-acid polypeptide reads, in one-letter code: Potassium-transporting ATPase potassium-binding subunit (567 aa).

Transmembrane regions (helical) follow at residues 5–25 (GWLQILIYIGILLLLVKPLGG), 64–84 (TTYSISMLLFSLAGFLMLYFL), 136–156 (GFTVQNFVSAATGIALAIALI), 179–199 (LYVLLPACIVMTLVFVYLGVP), 254–274 (ISNLIQMLAIFAIGAALTNVF), 285–305 (WAILAAMGTLFIAGVIVTYWA), 328–350 (VRFGITMSSLFAVITTAASCGAV), 375–395 (IVGGVGAGFYGILMFVIIAIF), 421–441 (MLAVLCLPAGMLIFTAISVVL), 459–481 (ILYAYSSAAANNGSAFAGLSANT), 486–506 (ITLGVVMLIGRFLVIVPALAI), and 529–549 (LFVGLLVGTILIVGGLTFFPA).

The protein belongs to the KdpA family. The system is composed of three essential subunits: KdpA, KdpB and KdpC.

It is found in the cell inner membrane. Part of the high-affinity ATP-driven potassium transport (or Kdp) system, which catalyzes the hydrolysis of ATP coupled with the electrogenic transport of potassium into the cytoplasm. This subunit binds the periplasmic potassium ions and delivers the ions to the membrane domain of KdpB through an intramembrane tunnel. This is Potassium-transporting ATPase potassium-binding subunit from Rhizobium rhizogenes (strain K84 / ATCC BAA-868) (Agrobacterium radiobacter).